The sequence spans 149 residues: Large ribosomal subunit protein uL13 (149 aa).

Belongs to the universal ribosomal protein uL13 family. In terms of assembly, part of the 50S ribosomal subunit.

Functionally, this protein is one of the early assembly proteins of the 50S ribosomal subunit, although it is not seen to bind rRNA by itself. It is important during the early stages of 50S assembly. This chain is Large ribosomal subunit protein uL13, found in Borrelia hermsii (strain HS1 / DAH).